We begin with the raw amino-acid sequence, 416 residues long: Neurotensin receptor type 2 (416 aa).

Topologically, residues 1 to 32 (METSSPWPPRPSPSAGLSLEARLGVDTRLWAK) are extracellular. A helical membrane pass occupies residues 33–55 (VLFTALYSLIFAFGTAGNALSVH). Residues 56 to 64 (VVLKARAGR) are Cytoplasmic-facing. The helical transmembrane segment at 65 to 87 (PGRLRYHVLSLALSALLLLLVSM) threads the bilayer. The Extracellular portion of the chain corresponds to 88 to 109 (PMELYNFVWSHYPWVFGDLGCR). A disulfide bridge links Cys108 with Cys194. Residues 110–131 (GYYFVRELCAYATVLSVASLSA) traverse the membrane as a helical segment. Residues 132-154 (ERCLAVCQPLRARRLLTPRRTRR) are Cytoplasmic-facing. A helical membrane pass occupies residues 155–176 (LLSLVWVASLGLALPMAVIMGQ). The Extracellular portion of the chain corresponds to 177–216 (KHEVESADGEPEPASRVCTVLVSRATLQVFIQVNVLVSFA). A helical membrane pass occupies residues 217–237 (LPLALTAFLNGITVNHLMALY). The Cytoplasmic segment spans residues 238–297 (SQVPSASAQVSSIPSRLELLSEEGLLGFITWRKTLSLGVQASLVRHKDASQIRSLQHSAQ). A helical transmembrane segment spans residues 298 to 318 (VLRAIVAVYVICWLPYHARRL). At 319–337 (MYCYIPDDGWTNELYDFYH) the chain is on the extracellular side. The chain crosses the membrane as a helical span at residues 338–358 (YFYMVTNTLFYVSSAVTPILY). Over 359–416 (NAVSSSFRKLFLESLGSLCGEQHSLVPLPQEAPESTTSTYSFRLWGSPRNPSLGEIQV) the chain is Cytoplasmic. Cys377 carries S-palmitoyl cysteine lipidation. Ser410 is modified (phosphoserine).

This sequence belongs to the G-protein coupled receptor 1 family. Neurotensin receptor subfamily. NTSR2 sub-subfamily. In terms of tissue distribution, abundant in cortex and hypothalamus, and lower levels seen in the heart and intestine.

The protein resides in the cell membrane. Its function is as follows. Receptor for the tridecapeptide neurotensin. It is associated with G proteins that activate a phosphatidylinositol-calcium second messenger system. This Rattus norvegicus (Rat) protein is Neurotensin receptor type 2 (Ntsr2).